The primary structure comprises 180 residues: ATP synthase subunit delta (180 aa).

It belongs to the ATPase delta chain family. In terms of assembly, F-type ATPases have 2 components, F(1) - the catalytic core - and F(0) - the membrane proton channel. F(1) has five subunits: alpha(3), beta(3), gamma(1), delta(1), epsilon(1). F(0) has three main subunits: a(1), b(2) and c(10-14). The alpha and beta chains form an alternating ring which encloses part of the gamma chain. F(1) is attached to F(0) by a central stalk formed by the gamma and epsilon chains, while a peripheral stalk is formed by the delta and b chains.

Its subcellular location is the cell membrane. Functionally, f(1)F(0) ATP synthase produces ATP from ADP in the presence of a proton or sodium gradient. F-type ATPases consist of two structural domains, F(1) containing the extramembraneous catalytic core and F(0) containing the membrane proton channel, linked together by a central stalk and a peripheral stalk. During catalysis, ATP synthesis in the catalytic domain of F(1) is coupled via a rotary mechanism of the central stalk subunits to proton translocation. This protein is part of the stalk that links CF(0) to CF(1). It either transmits conformational changes from CF(0) to CF(1) or is implicated in proton conduction. The polypeptide is ATP synthase subunit delta (Leuconostoc mesenteroides subsp. mesenteroides (strain ATCC 8293 / DSM 20343 / BCRC 11652 / CCM 1803 / JCM 6124 / NCDO 523 / NBRC 100496 / NCIMB 8023 / NCTC 12954 / NRRL B-1118 / 37Y)).